The chain runs to 179 residues: Protein HEADING DATE 3A (179 aa).

It belongs to the phosphatidylethanolamine-binding protein family. As to expression, expressed in the inner region of the SAM, stem and leaf blade vascular tissues (at protein level).

It is found in the cytoplasm. The protein localises to the nucleus. In terms of biological role, probable mobile flower-promoting signal (florigen) that moves from the leaf to the shoot apical meristem (SAM) and induces flowering. Promotes the transition from vegetative growth to flowering downstream of HD1 and EHD1 under short day (SD) conditions. Acts upstream of MADS14 and MADS15. The protein is Protein HEADING DATE 3A (HD3A) of Oryza sativa subsp. japonica (Rice).